A 220-amino-acid polypeptide reads, in one-letter code: Tumor protein D54 (220 aa).

Met-1 carries the N-acetylmethionine modification. Phosphoserine is present on residues Ser-3, Ser-12, and Ser-19. Residues 40–82 (GLTEGEEEELRAELAKVEEEIVTLRQVLAAKERHCGELKRRLG) adopt a coiled-coil conformation. Phosphoserine occurs at positions 96, 149, 168, and 175. Position 177 is a phosphothreonine (Thr-177). A Phosphoserine modification is found at Ser-180. Position 187 is a phosphothreonine (Thr-187). A disordered region spans residues 189 to 220 (KSKVVGGRENGSDNLPPSPGSGDQTLPDHAPF). Ser-206 and Ser-209 each carry phosphoserine.

The protein belongs to the TPD52 family. Forms a homodimer or heterodimer with other members of the family. Interacts with MAL2.

In Mus musculus (Mouse), this protein is Tumor protein D54 (Tpd52l2).